Consider the following 641-residue polypeptide: Methionine--tRNA ligase (641 aa).

The short motif at tyrosine 13–asparagine 23 is the 'HIGH' region element. Residues cysteine 128, cysteine 131, cysteine 145, and cysteine 148 each coordinate Zn(2+). Residues lysine 298–serine 302 carry the 'KMSKS' region motif. Position 301 (lysine 301) interacts with ATP. A tRNA-binding domain is found at aspartate 539–arginine 641.

The protein belongs to the class-I aminoacyl-tRNA synthetase family. MetG type 2A subfamily. Homodimer. Requires Zn(2+) as cofactor.

The protein resides in the cytoplasm. It carries out the reaction tRNA(Met) + L-methionine + ATP = L-methionyl-tRNA(Met) + AMP + diphosphate. Functionally, is required not only for elongation of protein synthesis but also for the initiation of all mRNA translation through initiator tRNA(fMet) aminoacylation. The sequence is that of Methionine--tRNA ligase from Clostridium tetani (strain Massachusetts / E88).